The chain runs to 408 residues: Histidine--tRNA ligase (408 aa).

This sequence belongs to the class-II aminoacyl-tRNA synthetase family. As to quaternary structure, homodimer.

The protein resides in the cytoplasm. It catalyses the reaction tRNA(His) + L-histidine + ATP = L-histidyl-tRNA(His) + AMP + diphosphate + H(+). This is Histidine--tRNA ligase from Campylobacter jejuni subsp. jejuni serotype O:2 (strain ATCC 700819 / NCTC 11168).